The primary structure comprises 449 residues: MAEETEKKYITNEDLKKHNKSGDLWIAIQGKVYNVSDWIKTHPGGDTVILNLVGQDVTDAFIAFHPGTAWHHLDHLFTGYHIRDFQVSEVSRDYRRMAAEFRKLGLFENKGHVTLYTLAFVAAMFLGVLYGVLACTSVFAHQIAAALLGLLWIQSAYIGHDSGHYVIMSNKSYNRFAQLLSGNCLTGISIAWWKWTHNAHHLACNSLDYDPDLQHIPVFAVSTKFFSSLTSRFYDRKLTFDPVARFLVSYQHFTYYPVMCFGRINLFIQTFLLLFSKREVPDRALNFAGILVFWTWFPLLVSCLPNWPERFFFVFTSFTVTALQHIQFTLNHFAADVYVGPPTGSDWFEKQAAGTIDISCRSYMDWFFGGLQFQLEHHLFPRLPRCHLRKVSPVVQELCKKHNLPYRSMSWFEANVLTINTLKTAAYQARDVANPVVKNLVWEALNTHG.

Residues 7 to 91 enclose the Cytochrome b5 heme-binding domain; the sequence is KKYITNEDLK…IRDFQVSEVS (85 aa). Heme-binding residues include His-42 and His-65. 2 consecutive transmembrane segments (helical) span residues 113–133 and 138–158; these read VTLY…YGVL and VFAH…SAYI. The short motif at 160 to 164 is the Histidine box-1 element; the sequence is HDSGH. The helical transmembrane segment at 173-195 threads the bilayer; sequence YNRFAQLLSGNCLTGISIAWWKW. The Histidine box-2 motif lies at 197–201; it reads HNAHH. Transmembrane regions (helical) follow at residues 255–275, 284–304, and 311–331; these read YYPV…LLLF, ALNF…VSCL, and FFFV…FTLN. Residues 374 to 378 carry the Histidine box-3 motif; it reads QLEHH.

This sequence belongs to the fatty acid desaturase type 1 family. Fe cation serves as cofactor. As to expression, highly expressed in flowers. Expressed in roots, leaves, stems and siliques.

It is found in the endoplasmic reticulum membrane. The enzyme catalyses an N-acyl-(4R)-4-hydroxysphinganine + 2 Fe(II)-[cytochrome b5] + O2 + 2 H(+) = a (4R,8E)-4-hydroxysphingenine ceramide + 2 Fe(III)-[cytochrome b5] + 2 H2O. It carries out the reaction an N-acyl-(4R)-4-hydroxysphinganine + 2 Fe(II)-[cytochrome b5] + O2 + 2 H(+) = a (4R,8Z)-4-hydroxysphing-8-enine ceramide + 2 Fe(III)-[cytochrome b5] + 2 H2O. In terms of biological role, plays a major role as delta(8)-fatty-acid desaturase which introduces a double bond at the 8-position in the long-chain base (LCB) of ceramides with or without a hydroxy group at the 4-position. The enzyme produces both the 8E and 8Z isomers (in a 4:1 ratio). This structural modification contributes to the quantitative partitioning of ceramides between the two major sphingolipid classes, glucosylceramides and glycosylinositolphosphoryl ceramides. Sphingolipids are important membrane components involved in environmental stress responses, such as resistance to chilling, and act as cell signaling molecules. The sequence is that of Delta(8)-fatty-acid desaturase 1 (SLD1) from Arabidopsis thaliana (Mouse-ear cress).